Reading from the N-terminus, the 374-residue chain is Putative F-box protein At3g16590 (374 aa).

Residues 1–45 (MPTKLPLELEDEILLRVPPLSLTRFRTVCKRWNTLFNDQRFINNH) form the F-box domain.

The sequence is that of Putative F-box protein At3g16590 from Arabidopsis thaliana (Mouse-ear cress).